The chain runs to 307 residues: Phosphate import ATP-binding protein PstB (307 aa).

The tract at residues 1–30 (MSETTYTTTEDTDDTNSTDSMVGTTTGETD) is disordered. An ABC transporter domain is found at 48–302 (LGVDDLDVYY…PQSERVEDYI (255 aa)). Position 80–87 (80–87 (GPSGCGKS)) interacts with ATP.

It belongs to the ABC transporter superfamily. Phosphate importer (TC 3.A.1.7) family. The complex is composed of two ATP-binding proteins (PstB), two transmembrane proteins (PstC and PstA) and a solute-binding protein (PstS).

It is found in the cell membrane. The enzyme catalyses phosphate(out) + ATP + H2O = ADP + 2 phosphate(in) + H(+). Part of the ABC transporter complex PstSACB involved in phosphate import. Responsible for energy coupling to the transport system. In Haloquadratum walsbyi (strain DSM 16790 / HBSQ001), this protein is Phosphate import ATP-binding protein PstB.